Reading from the N-terminus, the 455-residue chain is MASRTNTSSYKRMFGGERPAMVRSTYSSRQYSSPVRTTSRVSYSSASSASPSIYMSKGARVRSSGPLPRLATETLDFGLADAINTEFKTNRTNEKAEMQHLNDRFASYIDKVRFLEQQNKILIAELEQMRGKGSSRVGDLYQDEMRELRRQVDQLTNEKATVEVDRDNLGEDIERLKEKLQEEMLQREDAENTLRGFRQDVDNASLARLHLETKVESLQEEIAFLKKLHDEELAELQIQIQEQHVQIDMEVAKPDLTAALKDVRQQYETLASRNLQESEEWYKSKFADLSEAAARNNEAIRLAKQEANDYRRQLQSLTCDLEALKGTNESLERQLREMEDNFSMEASGYQDTIARLEDDIRNMKDEMARHLREYQDLLNVKMALDIEIATYRKLLEGEESRITTPFPNLSSLTLRETMKETRPAMDSLSKKVVIKTIETRDGHIINESSQNDDLE.

The interval 1–87 (MASRTNTSSY…GLADAINTEF (87 aa)) is head. Residues 87 to 122 (FKTNRTNEKAEMQHLNDRFASYIDKVRFLEQQNKIL) are a coiled coil. A coil 1A region spans residues 88–122 (KTNRTNEKAEMQHLNDRFASYIDKVRFLEQQNKIL). The region spanning 94–402 (EKAEMQHLND…KLLEGEESRI (309 aa)) is the IF rod domain. A linker 1 region spans residues 123-144 (IAELEQMRGKGSSRVGDLYQDE). A coiled-coil region spans residues 145–236 (MRELRRQVDQ…KLHDEELAEL (92 aa)). The interval 145–236 (MRELRRQVDQ…KLHDEELAEL (92 aa)) is coil 1B. Positions 237 to 259 (QIQIQEQHVQIDMEVAKPDLTAA) are linker 12. The coil 2 stretch occupies residues 260 to 398 (LKDVRQQYET…ATYRKLLEGE (139 aa)). A coiled-coil region spans residues 294-398 (ARNNEAIRLA…ATYRKLLEGE (105 aa)). Positions 399-455 (ESRITTPFPNLSSLTLRETMKETRPAMDSLSKKVVIKTIETRDGHIINESSQNDDLE) are tail.

The protein belongs to the intermediate filament family. Homomer assembled from elementary dimers. In terms of processing, one of the most prominent phosphoproteins in various cells of mesenchymal origin. Phosphorylation is enhanced during cell division, at which time vimentin filaments are significantly reorganized.

Its subcellular location is the cytoplasm. The protein resides in the cytoskeleton. It localises to the nucleus matrix. In terms of biological role, vimentins are class-III intermediate filaments found in various non-epithelial cells, especially mesenchymal cells. Vimentin is attached to the nucleus, endoplasmic reticulum, and mitochondria, either laterally or terminally. This chain is Vimentin (vim), found in Cyprinus carpio (Common carp).